The sequence spans 209 residues: Uridine kinase (209 aa).

12-19 (GGSGGGKT) contributes to the ATP binding site.

This sequence belongs to the uridine kinase family.

It is found in the cytoplasm. The enzyme catalyses uridine + ATP = UMP + ADP + H(+). The catalysed reaction is cytidine + ATP = CMP + ADP + H(+). It participates in pyrimidine metabolism; CTP biosynthesis via salvage pathway; CTP from cytidine: step 1/3. Its pathway is pyrimidine metabolism; UMP biosynthesis via salvage pathway; UMP from uridine: step 1/1. The chain is Uridine kinase from Streptococcus agalactiae serotype III (strain NEM316).